The sequence spans 446 residues: Ribosomal protein uS12 methylthiotransferase RimO (446 aa).

The MTTase N-terminal domain occupies P6 to P116. Residues C15, C51, C80, C148, C152, and C155 each coordinate [4Fe-4S] cluster. The Radical SAM core domain occupies L134–A375. In terms of domain architecture, TRAM spans Q378–N446.

The protein belongs to the methylthiotransferase family. RimO subfamily. [4Fe-4S] cluster is required as a cofactor.

Its subcellular location is the cytoplasm. The catalysed reaction is L-aspartate(89)-[ribosomal protein uS12]-hydrogen + (sulfur carrier)-SH + AH2 + 2 S-adenosyl-L-methionine = 3-methylsulfanyl-L-aspartate(89)-[ribosomal protein uS12]-hydrogen + (sulfur carrier)-H + 5'-deoxyadenosine + L-methionine + A + S-adenosyl-L-homocysteine + 2 H(+). In terms of biological role, catalyzes the methylthiolation of an aspartic acid residue of ribosomal protein uS12. This chain is Ribosomal protein uS12 methylthiotransferase RimO, found in Pasteurella multocida (strain Pm70).